A 632-amino-acid chain; its full sequence is Probable potassium transport system protein Kup (632 aa).

Helical transmembrane passes span 17–37, 60–80, 106–126, 146–166, 175–195, 210–230, 254–274, 292–312, 344–364, 370–390, 401–421, and 426–446; these read LFYL…TSPL, LISL…VLFL, TAIL…DAMI, LSEY…VVQS, FFGP…ISHI, AVSF…AVFL, WFLL…ALVL, ALLP…QAVI, IFVP…VLSF, LATA…IMAF, LPVA…FLGA, and IHDG…IMWT.

Belongs to the HAK/KUP transporter (TC 2.A.72) family.

It is found in the cell inner membrane. The catalysed reaction is K(+)(in) + H(+)(in) = K(+)(out) + H(+)(out). In terms of biological role, transport of potassium into the cell. Likely operates as a K(+):H(+) symporter. This is Probable potassium transport system protein Kup from Rhizobium rhizogenes (Agrobacterium rhizogenes).